A 227-amino-acid chain; its full sequence is MKVSYHGHSVVKIETNGKVMLIDPFLTGNPKTDLKAEDVKVDAILLSHGHGDHVGDTVELAKKNNAVVVAPFELATFLSWQGVKTHPMHIGGSHEFDFGKVKFTQAFHGSSYIDEENKTITYTGMPAGILFTAEEKTLYHAGDTALFSDMKLIGELNNVDVAFLPIGDNFTMGPEDAVLAAKWVQAKTVVPMHYNTFPVIEQDPYQFVEKLQNCTGKVLEAGESITL.

Belongs to the UPF0173 family.

This is UPF0173 metal-dependent hydrolase BCQ_4418 from Bacillus cereus (strain Q1).